The primary structure comprises 493 residues: Acetylcholine receptor subunit beta (493 aa).

The N-terminal stretch at 1 to 24 (MENVRRMALGLVVMMALALSGVGA) is a signal peptide. At 25–240 (SVMEDTLLSV…VTFYLIIQRK (216 aa)) the chain is on the extracellular side. Cys152 and Cys166 are joined by a disulfide. N-linked (GlcNAc...) asparagine glycosylation occurs at Asn165. 3 helical membrane passes run 241–265 (PLFY…VFYL), 273–291 (MSLS…LLLA), and 307–328 (YLMF…VLNL). The Cytoplasmic portion of the chain corresponds to 329 to 461 (HHRSPNTHTM…WQYVAMVADR (133 aa)). The residue at position 379 (Tyr379) is a Phosphotyrosine; by Tyr-kinases. A helical transmembrane segment spans residues 462–480 (LFLYVFFVICSIGTFSIFL).

It belongs to the ligand-gated ion channel (TC 1.A.9) family. Acetylcholine receptor (TC 1.A.9.1) subfamily. Beta-1/CHRNB1 sub-subfamily. In terms of assembly, pentamer of two alpha chains, and one each of the beta, delta, and gamma chains.

It localises to the postsynaptic cell membrane. The protein localises to the cell membrane. The enzyme catalyses K(+)(in) = K(+)(out). The catalysed reaction is Na(+)(in) = Na(+)(out). In terms of biological role, after binding acetylcholine, the AChR responds by an extensive change in conformation that affects all subunits and leads to opening of an ion-conducting channel across the plasma membrane. This chain is Acetylcholine receptor subunit beta (CHRNB1), found in Tetronarce californica (Pacific electric ray).